Here is a 588-residue protein sequence, read N- to C-terminus: MEVIHGRPYCCRELEGADILSNTFYSNGLHTPYETTIRPTASEDRYQELRQALPQCRLRWGADREYGGMLPVSLPEEHRPKCEPPRLMSKGHQHYGFGGEIWPKKLPIEQYYYLTQNKKSDLYGNDSLLPKPPNSTVGEICSSYPIEHPYHTHISRGAMFPAFTSPKDLYTGVKARTQQPFPPTLPTKTYDSTILKTRGNPYRYELLDLPTDSKKKALTWPGQSVYYDFPKCVEKNKPVFYPKPPKTFAPNSSVTPWDTMTSAKDANIQRNLERSHWLTSYTHDFTGLGPMSPLELDDYREKELAELTGQIGFDPQPQEKFHPSLKPPRPLDGRIARLIQNQRPLEATVQIPPSCPDCTPRVLCAFHTFIPSSAEMMAMNDHLLSGLTHKNQNIEDKIKEEQRLLSTYALPSSYESKDMGSLFDLHSLPKITDTKKSDDLYWRQLDVKPLPIARSKSNHYIDYEPHKSTYRDPYAMCLNPVRLSKSNILQNKTDMADLTFDNYLRKPEFLGTDIESSDETRPLLNWISRAGVPKHHTNFRDFKNSFSRSMAHKRLHNSIQEEQKDLRDKLQCGMRHQFYGHNSHYFYN.

Thr219 is subject to Phosphothreonine. Ser224, Ser406, Ser421, Ser427, and Ser437 each carry phosphoserine. The residue at position 441 (Tyr441) is a Phosphotyrosine. Phosphoserine occurs at positions 457 and 484. Thr512 is subject to Phosphothreonine. At Ser516 the chain carries Phosphoserine. Residue Lys543 forms a Glycyl lysine isopeptide (Lys-Gly) (interchain with G-Cter in SUMO2) linkage. Ser545 bears the Phosphoserine mark.

The protein localises to the cytoplasm. Its subcellular location is the cytoskeleton. It localises to the microtubule organizing center. It is found in the centrosome. The protein resides in the flagellum axoneme. Functionally, microtubule inner protein (MIP) part of the dynein-decorated doublet microtubules (DMTs) in flagellum axoneme. May serve to reinforce and thus stabilize the microtubule structure in the sperm flagella. The sequence is that of Sperm-associated microtubule inner protein 4 (Spmip4) from Rattus norvegicus (Rat).